The following is a 229-amino-acid chain: Thymidylate kinase (229 aa).

Residue Gly9–Ser16 coordinates ATP.

The protein belongs to the thymidylate kinase family.

The catalysed reaction is dTMP + ATP = dTDP + ADP. In terms of biological role, phosphorylation of dTMP to form dTDP in both de novo and salvage pathways of dTTP synthesis. In Roseiflexus castenholzii (strain DSM 13941 / HLO8), this protein is Thymidylate kinase.